The following is a 301-amino-acid chain: General transcription and DNA repair factor IIH subunit TFB4 (301 aa).

A C4-type zinc finger spans residues 259–276 (CSVCLSIFCEHHKKCSTC).

This sequence belongs to the TFB4 family. As to quaternary structure, component of the 7-subunit TFIIH core complex composed of XPB, XPD, TFB1/GTF2H1, GTF2H2/P44, TFB4/GTF2H3, TFB2/GTF2H4 and TFB5/GTF2H5, which is active in NER. The core complex associates with the 3-subunit CDK-activating kinase (CAK) module composed of CYCH1/cyclin H1, CDKD and MAT1/At4g30820 to form the 10-subunit holoenzyme (holo-TFIIH) active in transcription.

Its subcellular location is the nucleus. Functionally, component of the general transcription and DNA repair factor IIH (TFIIH) core complex, which is involved in general and transcription-coupled nucleotide excision repair (NER) of damaged DNA and, when complexed to CAK, in RNA transcription by RNA polymerase II. In NER, TFIIH acts by opening DNA around the lesion to allow the excision of the damaged oligonucleotide and its replacement by a new DNA fragment. In transcription, TFIIH has an essential role in transcription initiation. When the pre-initiation complex (PIC) has been established, TFIIH is required for promoter opening and promoter escape. Phosphorylation of the C-terminal tail (CTD) of the largest subunit of RNA polymerase II by the kinase module CAK controls the initiation of transcription. This is General transcription and DNA repair factor IIH subunit TFB4 from Arabidopsis thaliana (Mouse-ear cress).